Consider the following 228-residue polypeptide: Cytochrome b5 domain-containing protein 1 (228 aa).

Residues 17-83 (RRYFTPSEVA…DPQTRDIRKH (67 aa)) enclose the Cytochrome b5 heme-binding domain. Residue His-83 coordinates heme.

It belongs to the cytochrome b5 family.

The protein localises to the cytoplasm. Its subcellular location is the cytoskeleton. It is found in the cilium axoneme. Its function is as follows. Radial spoke stalk protein that binds heme under oxidizing conditions. Required for the coordinated beating of multiple cilia maybe by functioning in a redox signaling pathway. The protein is Cytochrome b5 domain-containing protein 1 (Cyb5d1) of Mus musculus (Mouse).